A 1176-amino-acid polypeptide reads, in one-letter code: 3-hydroxy-3-methylglutaryl-coenzyme A reductase (1176 aa).

The Cytoplasmic segment spans residues M1–P34. The chain crosses the membrane as a helical span at residues I35–L55. Residues A56–N299 are Lumenal-facing. 2 N-linked (GlcNAc...) asparagine glycosylation sites follow: N224 and N238. A helical membrane pass occupies residues I300–Y320. Residues D301 to L465 form the SSD domain. At V321 to Y330 the chain is on the cytoplasmic side. The helical transmembrane segment at T331–V351 threads the bilayer. Residues R352–G355 are Lumenal-facing. The chain crosses the membrane as a helical span at residues V356–F376. At E377–E422 the chain is on the cytoplasmic side. The chain crosses the membrane as a helical span at residues I423–L443. Residue S444 is a topological domain, lumenal. Residues A445–L465 form a helical membrane-spanning segment. At K466 to R524 the chain is on the cytoplasmic side. The chain crosses the membrane as a helical span at residues V525–F545. Over Q546 to P622 the chain is Lumenal. N-linked (GlcNAc...) asparagine glycosylation is found at N553 and N596. The helical transmembrane segment at V623–F643 threads the bilayer. Residues N644 to S1176 lie on the Cytoplasmic side of the membrane. The disordered stretch occupies residues P699–S724. The span at N700–H721 shows a compositional bias: basic residues. E841 acts as the Charge relay system in catalysis. Residue S847–K853 coordinates CoA. NADP(+) contacts are provided by residues S907–F909 and D934–S942. K972 (charge relay system) is an active-site residue. V1001–K1003 contacts CoA. Catalysis depends on D1048, which acts as the Charge relay system. A1145–H1146 provides a ligand contact to CoA. The Proton donor role is filled by H1146. An NADP(+)-binding site is contributed by N1150–R1151. The interval T1153–S1176 is disordered.

Belongs to the HMG-CoA reductase family.

It is found in the endoplasmic reticulum membrane. The catalysed reaction is (R)-mevalonate + 2 NADP(+) + CoA = (3S)-3-hydroxy-3-methylglutaryl-CoA + 2 NADPH + 2 H(+). The protein operates within metabolic intermediate biosynthesis; (R)-mevalonate biosynthesis; (R)-mevalonate from acetyl-CoA: step 3/3. HMG-CoA reductase; part of the first module of ergosterol biosynthesis pathway that includes the early steps of the pathway, conserved across all eukaryotes, and which results in the formation of mevalonate from acetyl-coenzyme A (acetyl-CoA). In this module, the cytosolic acetyl-CoA acetyltransferase catalyzes the formation of acetoacetyl-CoA. The hydroxymethylglutaryl-CoA synthase then condenses acetyl-CoA with acetoacetyl-CoA to form HMG-CoA. The rate-limiting step of the early module is the reduction to mevalonate by the 3-hydroxy-3-methylglutaryl-coenzyme A (HMG-CoA) reductase hmgA. The sequence is that of 3-hydroxy-3-methylglutaryl-coenzyme A reductase from Phycomyces blakesleeanus (strain ATCC 8743b / DSM 1359 / FGSC 10004 / NBRC 33097 / NRRL 1555).